An 847-amino-acid chain; its full sequence is B-cell receptor CD22 (847 aa).

Positions Met-1–Ser-19 are cleaved as a signal peptide. The 119-residue stretch at Asp-20–Glu-138 folds into the Ig-like V-type domain. Residues Asp-20–Arg-687 lie on the Extracellular side of the membrane. N-linked (GlcNAc...) asparagine glycosylation is found at Asn-67, Asn-101, and Asn-112. An N-acetylneuraminate-binding site is contributed by Arg-120. N-linked (GlcNAc...) asparagine glycosylation is found at Asn-135, Asn-164, and Asn-231. 6 Ig-like C2-type domains span residues Pro-143 to Gln-235, Pro-242 to Gln-326, Pro-331 to Gln-416, Pro-419 to Asn-500, Pro-505 to Ser-582, and Pro-593 to Thr-676. An intrachain disulfide couples Cys-161 to Cys-219. 2 cysteine pairs are disulfide-bonded: Cys-265–Cys-309 and Cys-353–Cys-396. Asn-363, Asn-428, Asn-445, Asn-448, and Asn-479 each carry an N-linked (GlcNAc...) asparagine glycan. Cystine bridges form between Cys-442-Cys-484 and Cys-529-Cys-571. Residues Asn-574 and Asn-634 are each glycosylated (N-linked (GlcNAc...) asparagine). Cys-616 and Cys-659 are joined by a disulfide. Residues Val-688–Leu-708 traverse the membrane as a helical segment. The Cytoplasmic portion of the chain corresponds to Gln-709–His-847. Phosphoserine occurs at positions 725, 726, and 729. 2 consecutive short sequence motifs (ITIM motif) follow at residues Ile-760–Leu-765 and Val-794–Leu-799. Tyr-762 is subject to Phosphotyrosine. 3 positions are modified to phosphotyrosine: Tyr-807, Tyr-822, and Tyr-842. Short sequence motifs (ITIM motif) lie at residues Ile-820–Leu-825 and Val-840–Leu-845.

It belongs to the immunoglobulin superfamily. SIGLEC (sialic acid binding Ig-like lectin) family. Predominantly monomer of isoform CD22-beta. Also found as heterodimer of isoform CD22-beta and a shorter isoform. Interacts with PTPN6/SHP-1, LYN, SYK, PIK3R1/PIK3R2 and PLCG1 upon phosphorylation. Interacts with GRB2, INPP5D and SHC1 upon phosphorylation. May form a complex with INPP5D/SHIP, GRB2 and SHC1. Phosphorylation of Tyr-762, Tyr-807 and Tyr-822 are involved in binding to SYK, GRB2 and SYK, respectively. Phosphorylation of Tyr-842 is involved in binding to SYK, PLCG2 and PIK3R1/PIK3R2. In terms of processing, phosphorylated on tyrosine residues by LYN.

It localises to the cell membrane. Functionally, most highly expressed siglec (sialic acid-binding immunoglobulin-like lectin) on B-cells that plays a role in various aspects of B-cell biology including differentiation, antigen presentation, and trafficking to bone marrow. Binds to alpha 2,6-linked sialic acid residues of surface molecules such as CD22 itself, CD45 and IgM in a cis configuration. Can also bind to ligands on other cells as an adhesion molecule in a trans configuration. Acts as an inhibitory coreceptor on the surface of B-cells and inhibits B-cell receptor induced signaling, characterized by inhibition of the calcium mobilization and cellular activation. Mechanistically, the immunoreceptor tyrosine-based inhibitory motif domain is phosphorylated by the Src kinase LYN, which in turn leads to the recruitment of the protein tyrosine phosphatase 1/PTPN6, leading to the negative regulation of BCR signaling. If this negative signaling from is of sufficient strength, apoptosis of the B-cell can be induced. The sequence is that of B-cell receptor CD22 from Pan troglodytes (Chimpanzee).